The chain runs to 137 residues: Phosphomevalonate dehydratase small subunit (137 aa).

Serine 65 acts as the Proton acceptor in catalysis.

The protein belongs to the AcnX type II small subunit family. In terms of assembly, heterodimer composed of a large subunit (PMDh-L) and a small subunit (PMDh-S).

It carries out the reaction (R)-5-phosphomevalonate = (2E)-3-methyl-5-phosphooxypent-2-enoate + H2O. It participates in isoprenoid biosynthesis; isopentenyl diphosphate biosynthesis via mevalonate pathway. Its function is as follows. Component of a hydro-lyase that catalyzes the dehydration of mevalonate 5-phosphate (MVA5P) to form trans-anhydromevalonate 5-phosphate (tAHMP). Involved in the archaeal mevalonate (MVA) pathway, which provides fundamental precursors for isoprenoid biosynthesis, such as isopentenyl diphosphate (IPP) and dimethylallyl diphosphate (DMAPP). In Methanococcoides burtonii (strain DSM 6242 / NBRC 107633 / OCM 468 / ACE-M), this protein is Phosphomevalonate dehydratase small subunit.